The chain runs to 536 residues: 3',5'-cyclic-AMP phosphodiesterase 4C (536 aa).

The segment at 49 to 69 is disordered; sequence QALLGTPPQSSQQAAPAEESG. The PDEase domain maps to 178–507; the sequence is VQTDQEEQLA…EWYQSRVPCS (330 aa). His-254 functions as the Proton donor in the catalytic mechanism. A 3',5'-cyclic AMP-binding site is contributed by His-254. Residues His-254 and His-258 each contribute to the AMP site. Positions 258, 294, 295, and 412 each coordinate Zn(2+). 4 residues coordinate AMP: Asp-295, Asp-412, Gln-463, and Phe-466. Residue Asp-295 coordinates Mg(2+). Asp-295 lines the Mn(2+) pocket. Positions 463 and 466 each coordinate 3',5'-cyclic AMP. Phosphoserine is present on Ser-507.

This sequence belongs to the cyclic nucleotide phosphodiesterase family. PDE4 subfamily. In terms of assembly, part of a complex containing AKAP5, ADCY5, ADCY6 and PKD2. Requires Zn(2+) as cofactor. Mg(2+) serves as cofactor. Mn(2+) is required as a cofactor.

It localises to the cell projection. The protein resides in the cilium. The catalysed reaction is 3',5'-cyclic AMP + H2O = AMP + H(+). Its pathway is purine metabolism; 3',5'-cyclic AMP degradation; AMP from 3',5'-cyclic AMP: step 1/1. Hydrolyzes the second messenger cAMP, which is a key regulator of many important physiological processes. The polypeptide is 3',5'-cyclic-AMP phosphodiesterase 4C (Rattus norvegicus (Rat)).